The primary structure comprises 87 residues: Small ribosomal subunit protein bS20 (87 aa).

Belongs to the bacterial ribosomal protein bS20 family.

Functionally, binds directly to 16S ribosomal RNA. The chain is Small ribosomal subunit protein bS20 from Mycoplasma pneumoniae (strain ATCC 29342 / M129 / Subtype 1) (Mycoplasmoides pneumoniae).